The chain runs to 588 residues: Phosphoinositide phosphatase SAC8 (588 aa).

Residues 37-56 form a disordered region; that stretch reads FSVNRRDGNIKPLDENASSG. Positions 40 to 50 are enriched in basic and acidic residues; that stretch reads NRRDGNIKPLD. Residues 129–455 form the SAC domain; the sequence is LQALETTPGL…GDEVSLQYAG (327 aa). The Phosphatase catalytic core motif lies at 390 to 401; that stretch reads RSNCIDCLDRTN. A run of 2 helical transmembrane segments spans residues 524 to 544 and 555 to 575; these read SFLPVASALLIGGVTVTSFTI and LASALWAGVTAGVVAMIKANG.

In terms of tissue distribution, ubiquitous with a higher level of expression in young seedlings than in other tissues.

It is found in the endoplasmic reticulum membrane. Functionally, phosphoinositide phosphatase that hydrolyzes PtdIns(3)P and PtdIns(4)P. This Arabidopsis thaliana (Mouse-ear cress) protein is Phosphoinositide phosphatase SAC8 (SAC8).